The sequence spans 131 residues: Sec-independent protein translocase protein TatB (131 aa).

A helical membrane pass occupies residues Phe2–Gly22. Residues Asp90–Thr131 form a disordered region. Positions Asp96 to Asp106 are enriched in basic and acidic residues.

Belongs to the TatB family. The Tat system comprises two distinct complexes: a TatABC complex, containing multiple copies of TatA, TatB and TatC subunits, and a separate TatA complex, containing only TatA subunits. Substrates initially bind to the TatABC complex, which probably triggers association of the separate TatA complex to form the active translocon.

The protein localises to the cell membrane. Its function is as follows. Part of the twin-arginine translocation (Tat) system that transports large folded proteins containing a characteristic twin-arginine motif in their signal peptide across membranes. Together with TatC, TatB is part of a receptor directly interacting with Tat signal peptides. TatB may form an oligomeric binding site that transiently accommodates folded Tat precursor proteins before their translocation. The sequence is that of Sec-independent protein translocase protein TatB from Mycobacterium bovis (strain ATCC BAA-935 / AF2122/97).